A 181-amino-acid chain; its full sequence is Regulator of G-protein signaling 10 (181 aa).

Residues 1 to 32 (MFNRAVSRLSRKRPPSDIHDSDGSSSSSHQSL) are disordered. Over residues 23–32 (GSSSSSHQSL) the composition is skewed to low complexity. A phosphoserine mark is found at Ser-24 and Ser-41. One can recognise an RGS domain in the interval 41-156 (SLENLLEDPE…LKSDLFLKHK (116 aa)). The S-palmitoyl cysteine moiety is linked to residue Cys-74. Positions 158–181 (TEEEEEDLPDAQTAAKRASRIYNT) are disordered. The residue at position 176 (Ser-176) is a Phosphoserine.

Interacts with GNAZ, GNAI1 and GNAI3. Associates specifically with the activated, GTP-bound forms of GNAZ and GNAI3.

It is found in the cytoplasm. It localises to the cytosol. The protein resides in the nucleus. Regulates G protein-coupled receptor signaling cascades, including signaling downstream of the muscarinic acetylcholine receptor CHRM2. Inhibits signal transduction by increasing the GTPase activity of G protein alpha subunits, thereby driving them into their inactive GDP-bound form. Modulates the activity of potassium channels that are activated in response to CHRM2 signaling. Activity on GNAZ is inhibited by palmitoylation of the G-protein. The polypeptide is Regulator of G-protein signaling 10 (RGS10) (Homo sapiens (Human)).